Reading from the N-terminus, the 177-residue chain is tRNA (cytidine(56)-2'-O)-methyltransferase (177 aa).

Residues Leu84 and 109–113 (GAEKV) each bind S-adenosyl-L-methionine.

This sequence belongs to the aTrm56 family. In terms of assembly, homodimer.

The protein resides in the cytoplasm. It catalyses the reaction cytidine(56) in tRNA + S-adenosyl-L-methionine = 2'-O-methylcytidine(56) in tRNA + S-adenosyl-L-homocysteine + H(+). Specifically catalyzes the AdoMet-dependent 2'-O-ribose methylation of cytidine at position 56 in tRNAs. The polypeptide is tRNA (cytidine(56)-2'-O)-methyltransferase (Methanosarcina barkeri (strain Fusaro / DSM 804)).